Here is a 549-residue protein sequence, read N- to C-terminus: NADH-quinone oxidoreductase subunit N (549 aa).

Helical transmembrane passes span 26 to 46, 57 to 77, 96 to 116, 148 to 168, 171 to 191, 206 to 226, 253 to 273, 297 to 317, 321 to 341, 347 to 367, 375 to 395, 421 to 441, 466 to 486, and 496 to 516; these read LSPL…EAFV, ALAM…VGAL, PSLF…LLIA, HTEV…FTAA, FLTM…LCGL, YFLL…MVYG, LLIG…TVPF, LVAA…TTVA, PMLW…AVTQ, LLAY…VAAN, MFYL…VTLV, AASL…SGFI, SAVT…AEPA, and GILT…LGIL.

The protein belongs to the complex I subunit 2 family. NDH-1 is composed of 14 different subunits. Subunits NuoA, H, J, K, L, M, N constitute the membrane sector of the complex.

The protein resides in the cell membrane. It carries out the reaction a quinone + NADH + 5 H(+)(in) = a quinol + NAD(+) + 4 H(+)(out). NDH-1 shuttles electrons from NADH, via FMN and iron-sulfur (Fe-S) centers, to quinones in the respiratory chain. The immediate electron acceptor for the enzyme in this species is believed to be a menaquinone. Couples the redox reaction to proton translocation (for every two electrons transferred, four hydrogen ions are translocated across the cytoplasmic membrane), and thus conserves the redox energy in a proton gradient. This chain is NADH-quinone oxidoreductase subunit N, found in Thermobifida fusca (strain YX).